The following is a 410-amino-acid chain: Proteasomal ubiquitin receptor ADRM1 (410 aa).

The 114-residue stretch at 17–130 (SSSKYLVEFR…RKVNEYLNNP (114 aa)) folds into the Pru domain. The residue at position 18 (Ser-18) is a Phosphoserine. Residues 191–257 (GSGGPATSSS…PAAQTPSLPA (67 aa)) are compositionally biased toward low complexity. Disordered stretches follow at residues 191–264 (GSGG…SSTQ) and 381–410 (FAKAMEGSDSKTDDGDSKDKKDDDEDMSLD). The 115-residue stretch at 281–395 (PAMPTEGSGV…EGSDSKTDDG (115 aa)) folds into the DEUBAD domain. Over residues 381–401 (FAKAMEGSDSKTDDGDSKDKK) the composition is skewed to basic and acidic residues.

It belongs to the ADRM1 family. In terms of assembly, component of the 19S proteasome regulatory particle complex. The 26S proteasome consists of a 20S core particle (CP) and two 19S regulatory subunits (RP).

It is found in the cytoplasm. The protein resides in the nucleus. In terms of biological role, component of the 26S proteasome, a multiprotein complex involved in the ATP-dependent degradation of ubiquitinated proteins. This complex plays a key role in the maintenance of protein homeostasis by removing misfolded or damaged proteins, which could impair cellular functions, and by removing proteins whose functions are no longer required. Therefore, the proteasome participates in numerous cellular processes, including cell cycle progression, apoptosis, or DNA damage repair. Within the complex, functions as a proteasomal ubiquitin receptor. The chain is Proteasomal ubiquitin receptor ADRM1 (adrm1b) from Danio rerio (Zebrafish).